The sequence spans 148 residues: Protein TIFY 5B (148 aa).

Residues 54–89 (PKQESQILTIFYNGHMCVSSDLTHLEANAILSLASR) enclose the Tify domain.

Belongs to the TIFY/JAZ family. Ubiquitinated. Targeted for degradation by the SCF(COI1) E3 ubiquitin ligase-proteasome pathway during jasmonate signaling.

The protein resides in the nucleus. In terms of biological role, repressor of jasmonate responses. The protein is Protein TIFY 5B (TIFY 5B) of Arabidopsis thaliana (Mouse-ear cress).